The sequence spans 201 residues: ADP-ribosylation factor-related protein 1 (201 aa).

The residue at position 1 (Met-1) is an N-acetylmethionine. Residues 24-31 (GLDNAGKT), 75-79 (DLGGQ), and 134-137 (NKQD) contribute to the GTP site.

The protein belongs to the small GTPase superfamily. Arf family. In terms of assembly, interacts with SYS1.

It localises to the golgi apparatus. The protein localises to the trans-Golgi network. Trans-Golgi-associated GTPase that regulates protein sorting. Controls the targeting of ARL1 and its effector to the trans-Golgi. Required for the lipidation of chylomicrons in the intestine and required for VLDL lipidation in the liver. This chain is ADP-ribosylation factor-related protein 1 (ARFRP1), found in Bos taurus (Bovine).